Reading from the N-terminus, the 308-residue chain is Ribosomal protein L11 methyltransferase (308 aa).

The S-adenosyl-L-methionine site is built by T160, G181, D203, and N245.

It belongs to the methyltransferase superfamily. PrmA family.

It is found in the cytoplasm. It catalyses the reaction L-lysyl-[protein] + 3 S-adenosyl-L-methionine = N(6),N(6),N(6)-trimethyl-L-lysyl-[protein] + 3 S-adenosyl-L-homocysteine + 3 H(+). Its function is as follows. Methylates ribosomal protein L11. The sequence is that of Ribosomal protein L11 methyltransferase from Thermoanaerobacter pseudethanolicus (strain ATCC 33223 / 39E) (Clostridium thermohydrosulfuricum).